We begin with the raw amino-acid sequence, 213 residues long: Homeobox protein koza (213 aa).

A disordered region spans residues 24–72; it reads ILSHMGPGSKEKSLGFPKTDQDQDSSLRDTEEKYASEKLQSSSQPAEIH. A compositionally biased stretch (basic and acidic residues) spans 32 to 59; that stretch reads SKEKSLGFPKTDQDQDSSLRDTEEKYAS. The homeobox DNA-binding region spans 102-161; that stretch reads QKRSRAAFSHSQVIELERKFSSQKYLSAPERAQLAKSLKLTETQVKIWFQNRRYKTKRKQ.

It belongs to the NK-3 homeobox family. Expressed in the muscle layer of embryonic somites. In tailbud embryos, expressed throughout the entire myotome but at the mid-tailbud stage (stage 32), expression becomes restricted to the outer periphery of the somite so that by the tadpole stage only the outer, type I cells show expression. Also expressed in the dorsal cement gland and in the myocardial layer of the developing heart. In all tissues, expression begins after terminal differentiation.

The protein localises to the nucleus. In terms of biological role, may regulate cell proliferation in a tissue-specific manner. The protein is Homeobox protein koza of Xenopus laevis (African clawed frog).